The sequence spans 273 residues: Putative phosphoenolpyruvate synthase regulatory protein (273 aa).

An ADP-binding site is contributed by 153–160 (GVSRSGKT).

This sequence belongs to the pyruvate, phosphate/water dikinase regulatory protein family. PSRP subfamily.

The catalysed reaction is [pyruvate, water dikinase] + ADP = [pyruvate, water dikinase]-phosphate + AMP + H(+). It carries out the reaction [pyruvate, water dikinase]-phosphate + phosphate + H(+) = [pyruvate, water dikinase] + diphosphate. Its function is as follows. Bifunctional serine/threonine kinase and phosphorylase involved in the regulation of the phosphoenolpyruvate synthase (PEPS) by catalyzing its phosphorylation/dephosphorylation. The polypeptide is Putative phosphoenolpyruvate synthase regulatory protein (Leptothrix cholodnii (strain ATCC 51168 / LMG 8142 / SP-6) (Leptothrix discophora (strain SP-6))).